A 181-amino-acid chain; its full sequence is Large ribosomal subunit protein uL5 (181 aa).

It belongs to the universal ribosomal protein uL5 family. As to quaternary structure, part of the 50S ribosomal subunit; part of the 5S rRNA/L5/L18/L25 subcomplex. Contacts the 5S rRNA and the P site tRNA. Forms a bridge to the 30S subunit in the 70S ribosome.

Its function is as follows. This is one of the proteins that bind and probably mediate the attachment of the 5S RNA into the large ribosomal subunit, where it forms part of the central protuberance. In the 70S ribosome it contacts protein S13 of the 30S subunit (bridge B1b), connecting the 2 subunits; this bridge is implicated in subunit movement. Contacts the P site tRNA; the 5S rRNA and some of its associated proteins might help stabilize positioning of ribosome-bound tRNAs. The protein is Large ribosomal subunit protein uL5 of Onion yellows phytoplasma (strain OY-M).